Consider the following 310-residue polypeptide: Ribose-phosphate pyrophosphokinase (310 aa).

ATP contacts are provided by residues 33–35 and 92–93; these read DGE and RQ. Positions 127 and 166 each coordinate Mg(2+). Lys-189 is a catalytic residue. D-ribose 5-phosphate contacts are provided by residues Arg-191, Asp-215, and 219–223; that span reads DTAGT.

It belongs to the ribose-phosphate pyrophosphokinase family. Class I subfamily. Homohexamer. Mg(2+) is required as a cofactor.

It is found in the cytoplasm. It carries out the reaction D-ribose 5-phosphate + ATP = 5-phospho-alpha-D-ribose 1-diphosphate + AMP + H(+). Its pathway is metabolic intermediate biosynthesis; 5-phospho-alpha-D-ribose 1-diphosphate biosynthesis; 5-phospho-alpha-D-ribose 1-diphosphate from D-ribose 5-phosphate (route I): step 1/1. In terms of biological role, involved in the biosynthesis of the central metabolite phospho-alpha-D-ribosyl-1-pyrophosphate (PRPP) via the transfer of pyrophosphoryl group from ATP to 1-hydroxyl of ribose-5-phosphate (Rib-5-P). The polypeptide is Ribose-phosphate pyrophosphokinase (Bordetella pertussis (strain Tohama I / ATCC BAA-589 / NCTC 13251)).